The primary structure comprises 301 residues: Probable alpha-L-glutamate ligase (301 aa).

The ATP-grasp domain maps to 104–287 (LQLLSRKGVG…VAGRIVSFIE (184 aa)). ATP-binding positions include Lys-141, 178-179 (EF), Asp-187, and 211-213 (RSN). Mg(2+) contacts are provided by Asp-248, Glu-260, and Asn-262. Mn(2+) contacts are provided by Asp-248, Glu-260, and Asn-262.

The protein belongs to the RimK family. It depends on Mg(2+) as a cofactor. Requires Mn(2+) as cofactor.

This is Probable alpha-L-glutamate ligase from Thioalkalivibrio sulfidiphilus (strain HL-EbGR7).